Consider the following 381-residue polypeptide: Creatine kinase M-type (381 aa).

In terms of domain architecture, Phosphagen kinase N-terminal spans 11-98; it reads KLNYKPEEEY…FDPIIQDRHG (88 aa). Positions 125-367 constitute a Phosphagen kinase C-terminal domain; that stretch reads YVLSSRVRTG…KLMVEMEKKL (243 aa). ATP is bound at residue 128–132; sequence SSRVR. Phosphoserine is present on Ser-164. Thr-166 is modified (phosphothreonine). Phosphoserine is present on Ser-178. Phosphothreonine is present on Thr-180. His-191 lines the ATP pocket. Ser-199 bears the Phosphoserine mark. Arg-236 and Arg-292 together coordinate ATP. Phosphothreonine occurs at positions 313 and 322. Residues 320-325 and Asp-335 each bind ATP; that span reads RGTGGV. Residue Ser-372 is modified to Phosphoserine.

This sequence belongs to the ATP:guanido phosphotransferase family. In terms of assembly, dimer of identical or non-identical chains, which can be either B (brain type) or M (muscle type). With MM being the major form in skeletal muscle and myocardium, MB existing in myocardium, and BB existing in many tissues, especially brain.

It localises to the cytoplasm. The enzyme catalyses creatine + ATP = N-phosphocreatine + ADP + H(+). In terms of biological role, reversibly catalyzes the transfer of phosphate between ATP and various phosphogens (e.g. creatine phosphate). Creatine kinase isoenzymes play a central role in energy transduction in tissues with large, fluctuating energy demands, such as skeletal muscle, heart, brain and spermatozoa. The protein is Creatine kinase M-type (CKM) of Canis lupus familiaris (Dog).